A 377-amino-acid chain; its full sequence is NADH dehydrogenase [ubiquinone] 1 alpha subcomplex subunit 9, mitochondrial (377 aa).

The transit peptide at 1 to 35 (MAAAAQSRVVRVLSMSRSAITAIATSVCHGPPCRQ) directs the protein to the mitochondrion. Position 175 is an N6-succinyllysine (K175). N6-acetyllysine occurs at positions 189 and 370.

The protein belongs to the complex I NDUFA9 subunit family. As to quaternary structure, complex I is composed of 45 different subunits. This a component of the hydrophobic protein fraction. Interacts with BLOC1S1. Interacts with SLC2A4. Interacts with CLOCK. Interacts with RAB5IF. FAD serves as cofactor. In terms of processing, acetylated on lysine residues. BLOC1S1 is required for acetylation.

The protein resides in the mitochondrion matrix. Accessory subunit of the mitochondrial membrane respiratory chain NADH dehydrogenase (Complex I), that is believed not to be involved in catalysis. Complex I functions in the transfer of electrons from NADH to the respiratory chain. The immediate electron acceptor for the enzyme is believed to be ubiquinone. This Gorilla gorilla gorilla (Western lowland gorilla) protein is NADH dehydrogenase [ubiquinone] 1 alpha subcomplex subunit 9, mitochondrial (NDUFA9).